Here is a 171-residue protein sequence, read N- to C-terminus: uncharacterized protein (171 aa).

A helical membrane pass occupies residues glycine 21–alanine 43.

It localises to the membrane. This is an uncharacterized protein from Archaeoglobus fulgidus (strain ATCC 49558 / DSM 4304 / JCM 9628 / NBRC 100126 / VC-16).